Here is a 527-residue protein sequence, read N- to C-terminus: Probable bifunctional tRNA threonylcarbamoyladenosine biosynthesis protein (527 aa).

The interval 1-324 (MIVLGLEGTA…YRIDEVDAPW (324 aa)) is kae1. Residues H107, H111, and Y128 each coordinate Fe cation. Residues 128 to 132 (YVSGG), D160, G173, E177, and N257 each bind L-threonylcarbamoyladenylate. Fe cation is bound at residue D285. The Protein kinase domain maps to 330–527 (VKYRDAGAES…EDIRRRHRYV (198 aa)). ATP contacts are provided by residues 333–341 (RDAGAESRI) and K354. D445 acts as the Proton acceptor; for kinase activity in catalysis.

In the N-terminal section; belongs to the KAE1 / TsaD family. This sequence in the C-terminal section; belongs to the protein kinase superfamily. Tyr protein kinase family. BUD32 subfamily. In terms of assembly, component of the KEOPS complex that consists of Kae1, Bud32, Cgi121 and Pcc1; the whole complex dimerizes. Requires Fe(2+) as cofactor.

It localises to the cytoplasm. It catalyses the reaction L-seryl-[protein] + ATP = O-phospho-L-seryl-[protein] + ADP + H(+). It carries out the reaction L-threonyl-[protein] + ATP = O-phospho-L-threonyl-[protein] + ADP + H(+). The catalysed reaction is L-threonylcarbamoyladenylate + adenosine(37) in tRNA = N(6)-L-threonylcarbamoyladenosine(37) in tRNA + AMP + H(+). Functionally, required for the formation of a threonylcarbamoyl group on adenosine at position 37 (t(6)A37) in tRNAs that read codons beginning with adenine. Is a component of the KEOPS complex that is probably involved in the transfer of the threonylcarbamoyl moiety of threonylcarbamoyl-AMP (TC-AMP) to the N6 group of A37. The Kae1 domain likely plays a direct catalytic role in this reaction. The Bud32 domain probably displays kinase activity that regulates Kae1 function. The polypeptide is Probable bifunctional tRNA threonylcarbamoyladenosine biosynthesis protein (Thermoplasma volcanium (strain ATCC 51530 / DSM 4299 / JCM 9571 / NBRC 15438 / GSS1)).